A 455-amino-acid chain; its full sequence is MAPQLLLCLILTFLWSLPEAESNVFLKSKVANRFLQRTKRSNSLFEEIRPGNIERECIEEKCSKEEAREVFEDNEKTETFWNVYVDGDQCSSNPCHYRGTCKDGIGSYTCTCLPNYEGKNCEKVLYQSCRVDNGNCWHFCKRVQSETQCSCAESYRLGVDGHSCVAEGDFSCGRNIKARNKREASLPDFVQSQKATLLKKSDNPSPDIRIVNGMDCKLGECPWQAVLINEKGEVFCGGTILSPIHVLTAAHCINQTKSVSVIVGEIDISRKETRRLLSVDKIYVHTKFVPPNYYYVHQNFDRVAYDYDIAIIRMKTPIQFSENVVPACLPTADFANEVLMKQDSGIVSGFGRIRFKEPTSNTLKVITVPYVDRHTCMLSSDFRITQNMFCAGYDTLPQDACQGDSGGPHITAYRDTHFITGIISWGEGCARKGKYGVYTKVSRFIPWIKKIMSLK.

Positions 1-20 (MAPQLLLCLILTFLWSLPEA) are cleaved as a signal peptide. A propeptide spanning residues 21-40 (ESNVFLKSKVANRFLQRTKR) is cleaved from the precursor. The Gla domain occupies 41-86 (SNSLFEEIRPGNIERECIEEKCSKEEAREVFEDNEKTETFWNVYVD). Glu-46, Glu-47, Glu-54, Glu-56, Glu-59, Glu-60, Glu-65, Glu-66, Glu-69, Glu-72, and Glu-75 each carry 4-carboxyglutamate. Cys-57 and Cys-62 are oxidised to a cystine. Residues 86–122 (DGDQCSSNPCHYRGTCKDGIGSYTCTCLPNYEGKNCE) form the EGF-like 1; calcium-binding domain. 11 disulfides stabilise this stretch: Cys-90/Cys-101, Cys-95/Cys-110, Cys-112/Cys-121, Cys-129/Cys-140, Cys-136/Cys-149, Cys-151/Cys-164, Cys-172/Cys-328, Cys-216/Cys-221, Cys-236/Cys-252, Cys-376/Cys-390, and Cys-401/Cys-429. Ser-92 is a glycosylation site (O-linked (Hex...) serine). One can recognise an EGF-like 2 domain in the interval 129-164 (CRVDNGNCWHFCKRVQSETQCSCAESYRLGVDGHSC). A propeptide spans 182-209 (REASLPDFVQSQKATLLKKSDNPSPDIR) (activation peptide). Positions 210–453 (IVNGMDCKLG…FIPWIKKIMS (244 aa)) constitute a Peptidase S1 domain. His-251 acts as the Charge relay system in catalysis. Asn-254 is a glycosylation site (N-linked (GlcNAc...) asparagine). Residue Asp-308 is the Charge relay system of the active site. The active-site Charge relay system is Ser-405.

The protein belongs to the peptidase S1 family. Snake venom subfamily. As to quaternary structure, heterodimer of a light chain and a heavy chain; disulfide-linked. In terms of processing, gamma-carboxyglutamate residues are formed by vitamin K dependent carboxylation. These residues are essential for the binding of calcium. In terms of tissue distribution, expressed by the venom gland.

Its subcellular location is the secreted. The catalysed reaction is Selective cleavage of Arg-|-Thr and then Arg-|-Ile bonds in prothrombin to form thrombin.. Functionally, snake prothrombin activator that attacks the hemostatic system of prey. This protein is functionally similar to blood coagulation factor Xa. This is Venom prothrombin activator notecarin-D1 from Notechis scutatus scutatus (Mainland tiger snake).